Consider the following 207-residue polypeptide: Probable RNA 2'-phosphotransferase (207 aa).

The protein belongs to the KptA/TPT1 family.

Removes the 2'-phosphate from RNA via an intermediate in which the phosphate is ADP-ribosylated by NAD followed by a presumed transesterification to release the RNA and generate ADP-ribose 1''-2''-cyclic phosphate (APPR&gt;P). May function as an ADP-ribosylase. In Methanosarcina acetivorans (strain ATCC 35395 / DSM 2834 / JCM 12185 / C2A), this protein is Probable RNA 2'-phosphotransferase.